The following is a 292-amino-acid chain: Selenate reductase subunit B (292 aa).

A signal peptide (tat-type signal) is located at residues 1-43 (MGSKETKNTSRRDFLIKGAGAAALGAGAFAISQVPLLEKLASA). 4Fe-4S ferredoxin-type domains follow at residues 84–113 (WIMVIDLKKCVGCSSCTVACVSENVLPPGV), 129–160 (VTKKFTPRPCMQCEHPPCTKVCPIGATYKSED), and 161–190 (GIVAIDYDKCIGCRYCITACPYGARTFDWG). Cysteine 93, cysteine 96, cysteine 99, cysteine 103, cysteine 138, cysteine 141, cysteine 146, cysteine 150, cysteine 170, cysteine 173, cysteine 176, cysteine 180, cysteine 230, cysteine 233, cysteine 245, and cysteine 249 together coordinate [4Fe-4S] cluster.

As to quaternary structure, the complex is composed of three subunits: SrdA, SrdB and SrdC. [4Fe-4S] cluster is required as a cofactor. In terms of processing, predicted to be exported by the Tat system. The position of the signal peptide cleavage has not been experimentally proven.

The protein localises to the secreted. It catalyses the reaction selenite + a quinone + H2O = selenate + a quinol. In terms of biological role, component of the respiratory selenate reductase complex, which catalyzes the reduction of selenate to selenite. This subunit probably transfers electrons from SrdC to SrdA. This Mesobacillus selenatarsenatis (strain DSM 18680 / JCM 14380 / FERM P-15431 / SF-1) protein is Selenate reductase subunit B.